The chain runs to 251 residues: Phosphosulfolactate synthase (251 aa).

It belongs to the phosphosulfolactate synthase family. Homotrimer. Mg(2+) is required as a cofactor.

It catalyses the reaction (2R)-O-phospho-3-sulfolactate = phosphoenolpyruvate + sulfite + H(+). It participates in cofactor biosynthesis; coenzyme M biosynthesis; sulfoacetaldehyde from phosphoenolpyruvate and sulfite: step 1/4. Functionally, catalyzes the addition of sulfite to phosphoenolpyruvate (PEP) to yield (2R)-phospho-3-sulfolactate (PSL). The protein is Phosphosulfolactate synthase (comA) of Methanocaldococcus jannaschii (strain ATCC 43067 / DSM 2661 / JAL-1 / JCM 10045 / NBRC 100440) (Methanococcus jannaschii).